We begin with the raw amino-acid sequence, 33 residues long: Photosystem II reaction center protein Psb30 (33 aa).

A helical membrane pass occupies residues 5–25 (IVFQLTSLVLILAAGPLVVVL).

It belongs to the Psb30/Ycf12 family. In terms of assembly, PSII is composed of 1 copy each of membrane proteins PsbA, PsbB, PsbC, PsbD, PsbE, PsbF, PsbH, PsbI, PsbJ, PsbK, PsbL, PsbM, PsbT, PsbX, PsbY, PsbZ, Psb30/Ycf12, peripheral proteins of the oxygen-evolving complex and a large number of cofactors. It forms dimeric complexes.

The protein localises to the plastid. The protein resides in the chloroplast thylakoid membrane. Its function is as follows. A core subunit of photosystem II (PSII), probably helps stabilize the reaction center. The protein is Photosystem II reaction center protein Psb30 of Tetradesmus obliquus (Green alga).